The primary structure comprises 252 residues: 2-succinyl-6-hydroxy-2,4-cyclohexadiene-1-carboxylate synthase (252 aa).

The protein belongs to the AB hydrolase superfamily. MenH family. Monomer.

It carries out the reaction 5-enolpyruvoyl-6-hydroxy-2-succinyl-cyclohex-3-ene-1-carboxylate = (1R,6R)-6-hydroxy-2-succinyl-cyclohexa-2,4-diene-1-carboxylate + pyruvate. Its pathway is quinol/quinone metabolism; 1,4-dihydroxy-2-naphthoate biosynthesis; 1,4-dihydroxy-2-naphthoate from chorismate: step 3/7. The protein operates within quinol/quinone metabolism; menaquinone biosynthesis. Its function is as follows. Catalyzes a proton abstraction reaction that results in 2,5-elimination of pyruvate from 2-succinyl-5-enolpyruvyl-6-hydroxy-3-cyclohexene-1-carboxylate (SEPHCHC) and the formation of 2-succinyl-6-hydroxy-2,4-cyclohexadiene-1-carboxylate (SHCHC). This is 2-succinyl-6-hydroxy-2,4-cyclohexadiene-1-carboxylate synthase from Escherichia coli O7:K1 (strain IAI39 / ExPEC).